The chain runs to 157 residues: 2-C-methyl-D-erythritol 2,4-cyclodiphosphate synthase (157 aa).

The a divalent metal cation site is built by Asp-9 and His-11. 4-CDP-2-C-methyl-D-erythritol 2-phosphate contacts are provided by residues 9 to 11 and 35 to 36; these read DVH and HS. Residue His-43 participates in a divalent metal cation binding. 4-CDP-2-C-methyl-D-erythritol 2-phosphate-binding positions include 57–59, 62–66, 101–107, 133–136, Phe-140, and Arg-143; these read DIG, FPDTD, AEKPKMA, and TTTE.

The protein belongs to the IspF family. Homotrimer. Requires a divalent metal cation as cofactor.

The enzyme catalyses 4-CDP-2-C-methyl-D-erythritol 2-phosphate = 2-C-methyl-D-erythritol 2,4-cyclic diphosphate + CMP. It functions in the pathway isoprenoid biosynthesis; isopentenyl diphosphate biosynthesis via DXP pathway; isopentenyl diphosphate from 1-deoxy-D-xylulose 5-phosphate: step 4/6. In terms of biological role, involved in the biosynthesis of isopentenyl diphosphate (IPP) and dimethylallyl diphosphate (DMAPP), two major building blocks of isoprenoid compounds. Catalyzes the conversion of 4-diphosphocytidyl-2-C-methyl-D-erythritol 2-phosphate (CDP-ME2P) to 2-C-methyl-D-erythritol 2,4-cyclodiphosphate (ME-CPP) with a corresponding release of cytidine 5-monophosphate (CMP). The sequence is that of 2-C-methyl-D-erythritol 2,4-cyclodiphosphate synthase from Listeria innocua serovar 6a (strain ATCC BAA-680 / CLIP 11262).